The primary structure comprises 267 residues: tRNA (guanine-N(1)-)-methyltransferase (267 aa).

S-adenosyl-L-methionine contacts are provided by residues Gly119 and 139–144; that span reads IGDYVL.

This sequence belongs to the RNA methyltransferase TrmD family. Homodimer.

It localises to the cytoplasm. It catalyses the reaction guanosine(37) in tRNA + S-adenosyl-L-methionine = N(1)-methylguanosine(37) in tRNA + S-adenosyl-L-homocysteine + H(+). Functionally, specifically methylates guanosine-37 in various tRNAs. In Chromohalobacter salexigens (strain ATCC BAA-138 / DSM 3043 / CIP 106854 / NCIMB 13768 / 1H11), this protein is tRNA (guanine-N(1)-)-methyltransferase.